Reading from the N-terminus, the 408-residue chain is Dual-specificity RNA methyltransferase RlmN (408 aa).

The Proton acceptor role is filled by Glu120. One can recognise a Radical SAM core domain in the interval 126 to 375; that stretch reads EEGRGTLCIS…IRTPRGRDIL (250 aa). An intrachain disulfide couples Cys133 to Cys378. [4Fe-4S] cluster contacts are provided by Cys140, Cys144, and Cys147. S-adenosyl-L-methionine contacts are provided by residues 204-205, Ser236, 258-260, and Asn335; these read GE and SLH. Catalysis depends on Cys378, which acts as the S-methylcysteine intermediate.

Belongs to the radical SAM superfamily. RlmN family. [4Fe-4S] cluster serves as cofactor.

The protein resides in the cytoplasm. It carries out the reaction adenosine(2503) in 23S rRNA + 2 reduced [2Fe-2S]-[ferredoxin] + 2 S-adenosyl-L-methionine = 2-methyladenosine(2503) in 23S rRNA + 5'-deoxyadenosine + L-methionine + 2 oxidized [2Fe-2S]-[ferredoxin] + S-adenosyl-L-homocysteine. The catalysed reaction is adenosine(37) in tRNA + 2 reduced [2Fe-2S]-[ferredoxin] + 2 S-adenosyl-L-methionine = 2-methyladenosine(37) in tRNA + 5'-deoxyadenosine + L-methionine + 2 oxidized [2Fe-2S]-[ferredoxin] + S-adenosyl-L-homocysteine. Specifically methylates position 2 of adenine 2503 in 23S rRNA and position 2 of adenine 37 in tRNAs. m2A2503 modification seems to play a crucial role in the proofreading step occurring at the peptidyl transferase center and thus would serve to optimize ribosomal fidelity. The sequence is that of Dual-specificity RNA methyltransferase RlmN from Rhizobium leguminosarum bv. trifolii (strain WSM2304).